The following is a 707-amino-acid chain: Heat shock protein hsp88 (707 aa).

A compositionally biased stretch (basic and acidic residues) spans 662-692 (EAEKAAKKAEEEARKAKEAAEKAAQEGAKDD). The tract at residues 662 to 707 (EAEKAAKKAEEEARKAKEAAEKAAQEGAKDDEMTDADAPKPVVEEA) is disordered.

It belongs to the heat shock protein 70 family. In terms of assembly, binds hsp30 independent of temperature or substrate. In terms of processing, the N-terminus is blocked.

The protein localises to the cytoplasm. This Neurospora crassa (strain ATCC 24698 / 74-OR23-1A / CBS 708.71 / DSM 1257 / FGSC 987) protein is Heat shock protein hsp88 (hsp88).